Here is a 417-residue protein sequence, read N- to C-terminus: MATKNNPSPKPMGTAQGDPGEAGTLPAPEAGIRDTGSTQLKAKPKKIRKIKALVIDLGSQYCKCGYAGEPRPTYFISSTVGKRSAEMAADAGDTFKETYVGHELLNMEASLKLVNPLKHGVVVDWDCIQNIWEYIFHTAMKILPEEHAVLVSDPPLSPTSNREKYAELMFETFGIPAMHVTSQALLSIYSYGKTSGLVVESGHGVSHVVPISEGDLLPGLPSRVDYAGCDLTNYLMQLLNEAGHKFSDDHLHIIEHIKKKCCYAALLPEEEMSLGLDELHVDYELPDGKVITIGQERFRCSEMLFKPSLVGSTQPGLPELTATCLDRCQGTGFKEEMAANVLLCGGCTMLDGFPERFQRELSLLCPGDSPTVAAAPERKTSVWTGGSILASLQAFQQLWVSKEEFEERGCAAIYSKC.

Positions 1–39 (MATKNNPSPKPMGTAQGDPGEAGTLPAPEAGIRDTGSTQ) are disordered. Position 8 is a phosphoserine (Ser8).

The protein belongs to the actin family.

The protein resides in the cytoplasm. Its subcellular location is the cytoskeleton. The chain is Actin-like protein 7B (Actl7b) from Rattus norvegicus (Rat).